The sequence spans 102 residues: MDTVRLSHLVLQEGINHTMALWKFQAFELFTDHLNPEMCLSRDISLYTSMALMLVRIVVEAKRKVLVIWKAAFQSLQDGTCHGTICAHCSLEHYSLSTFVCC.

This is an uncharacterized protein from Saccharomyces cerevisiae (strain ATCC 204508 / S288c) (Baker's yeast).